The primary structure comprises 466 residues: Glutamate--tRNA ligase 1 (466 aa).

A 'HIGH' region motif is present at residues 9–19 (PSPTGMLHIGG). The 'KMSKS' region motif lies at 238–242 (KLSKR). ATP is bound at residue lysine 241.

The protein belongs to the class-I aminoacyl-tRNA synthetase family. Glutamate--tRNA ligase type 1 subfamily. As to quaternary structure, monomer.

The protein localises to the cytoplasm. The catalysed reaction is tRNA(Glu) + L-glutamate + ATP = L-glutamyl-tRNA(Glu) + AMP + diphosphate. In terms of biological role, catalyzes the attachment of glutamate to tRNA(Glu) in a two-step reaction: glutamate is first activated by ATP to form Glu-AMP and then transferred to the acceptor end of tRNA(Glu). This Acidiphilium cryptum (strain JF-5) protein is Glutamate--tRNA ligase 1.